The following is a 253-amino-acid chain: MVTKRIIPCLDVHNGRVVKGVNFVNIRDAGDPVEIASYYDKAGADELTFLDITASAEARNIMIDVVRRVAEQVFIPFTVGGGIRTVEDFREILKAGADKVSINSAAVKRPELISEAASRFGSQCVVVAIDAKRRDDNSGWDVYINGGRINTGKDAVEWAVEVEKLGAGEILLTSMDCDGTKKGYDIELTRKVSESVRIPVIASGGAGTMEHFREALVEGKADAVLAASLFHYREIEIMELKKYLKENGIEIRM.

Catalysis depends on residues Asp11 and Asp130.

This sequence belongs to the HisA/HisF family. Heterodimer of HisH and HisF.

The protein resides in the cytoplasm. It carries out the reaction 5-[(5-phospho-1-deoxy-D-ribulos-1-ylimino)methylamino]-1-(5-phospho-beta-D-ribosyl)imidazole-4-carboxamide + L-glutamine = D-erythro-1-(imidazol-4-yl)glycerol 3-phosphate + 5-amino-1-(5-phospho-beta-D-ribosyl)imidazole-4-carboxamide + L-glutamate + H(+). It functions in the pathway amino-acid biosynthesis; L-histidine biosynthesis; L-histidine from 5-phospho-alpha-D-ribose 1-diphosphate: step 5/9. In terms of biological role, IGPS catalyzes the conversion of PRFAR and glutamine to IGP, AICAR and glutamate. The HisF subunit catalyzes the cyclization activity that produces IGP and AICAR from PRFAR using the ammonia provided by the HisH subunit. The chain is Imidazole glycerol phosphate synthase subunit HisF from Acetivibrio thermocellus (strain ATCC 27405 / DSM 1237 / JCM 9322 / NBRC 103400 / NCIMB 10682 / NRRL B-4536 / VPI 7372) (Clostridium thermocellum).